The following is a 197-amino-acid chain: MDKKPCNSQDAEVRKGPWTMEEDLILINYIANHGEGVWNSLAKSAGLKRTGKSCRLRWLNYLRPDVRRGNITPEEQLLIMELHAKWGNRWSKIAKHLPGRTDNEIKNYWRTRIQKHIKQAETMNGQAASSEQNDHQEACTSQMSNGPNDNTIDQTYSPTSYSGNVDTFQAGPNFLTEANDNMWSMEDIWSMQLLNGD.

2 HTH myb-type domains span residues 10-62 and 63-117; these read DAEV…LNYL and RPDV…QKHI. 2 DNA-binding regions (H-T-H motif) span residues 38-62 and 90-113; these read WNSL…LNYL and WSKI…RTRI. The tract at residues 125–158 is disordered; that stretch reads GQAASSEQNDHQEACTSQMSNGPNDNTIDQTYSP. A compositionally biased stretch (polar residues) spans 138–158; the sequence is ACTSQMSNGPNDNTIDQTYSP.

As to expression, specifically expressed in flowers, mostly in stigmas, petal tubes and petal limbs, and, to a lower extent, in anthers and stamen. Also present at low levels in roots, stems, leaves and sepals.

It is found in the nucleus. MYB-type transcription factor controlling the production of volatile organic compounds (VOCs), including floral volatile benzenoids and phenylpropanoids (FVBP), in flowers of fragrant cultivars (e.g. cv. Mitchell and cv. V26) by regulating the expression of ODO1 and EOBI, key regulators of the shikimate pathway, and of several biosynthetic floral scent-related genes including IGS, PAL2 and CFAT. This scent, mostly produced in the evening and night by the petals, attracts the pollinators (e.g. the night-active hawkmoth pollinator Manduca sexta). Binds to and activates the ODO1 and EOBI promoters via MYB binding sites (MBS) 5'-AAACCTAAT-3' and 5'-CTAACT-3'. Regulates the promoters of IGS1, CFAT and PAL2. Controls flowers petal opening by modulating a global transcriptomic switch. In Petunia hybrida (Petunia), this protein is MYB-like transcription factor EOBII.